The following is a 783-amino-acid chain: MDQEMVTKETEKYIELPLLASRGVVVFPHMVIPLLVGREKSIEALEKAMVKDKEIIILSQKDEKIEDPDPEDLYTIGTIAEVKQLVKLPNGMLKVVVEGIKRARIIDFIEIDEYFEVRAEILDQTVPEVDLEMKALMKAVLNKFQEYIKYNRNLPSETIMTVTNIEEPARFSDTIASHLELKFRQEQDLLEAISIKERLNKLLEIIKDEIEILKVEQKIQKKVRKQVEKTQKEYYLREQLKAIKEELDEDEEDDEIEEYRNKAEELDLPEKIREKVDKEIEKLKKTPSMSPEATVIRNYLDCVLDLPWNKVREEKIDLDEAKNVLDSEHYGLEDVKERILEYLAVRKLAPQKKSPILCLIGAPGVGKTSLGRSIARALGRDFVRLSLGGVRDEAEIRGHRRTYIGSRPGRIINAMREAGSKNPVFLLDEVDKMSSDFRGDPAAALLEVLDPEQNNEFTDHYLELPFDLSKVLFVTTANVAYPIPAPLLDRMEVIELPGYTEDEKVEIALRHLIPRILNEHGLTEDEIHFSSNSIYRIIREYTREAGVRNLERKLAAITRKVSKEIVEGRGRQARVTTQSIEKYLGVPKFKYEKAQKKDRVGVATGMAYTQTGGDILDIEVAVVPGKGKLTLTGSLGDVMKESARAALSYIRSKQEELGLSDNFHEEYDLHVHVPKGATPKDGPSAGITIASAIASALTGQPVKGKYAMTGEVTLRGRVLPVGGIKTKIMAARRAGLKDIIMPEENKKDFEEIPVKIKKDIRVNFVNHMDQVLDLILGGDEDEN.

A Lon N-terminal domain is found at 16–210 (LPLLASRGVV…KLLEIIKDEI (195 aa)). An ATP-binding site is contributed by 361–368 (GAPGVGKT). Residues 597–778 (KDRVGVATGM…DQVLDLILGG (182 aa)) enclose the Lon proteolytic domain. Catalysis depends on residues Ser-684 and Lys-727.

This sequence belongs to the peptidase S16 family. In terms of assembly, homohexamer. Organized in a ring with a central cavity.

It is found in the cytoplasm. It catalyses the reaction Hydrolysis of proteins in presence of ATP.. Functionally, ATP-dependent serine protease that mediates the selective degradation of mutant and abnormal proteins as well as certain short-lived regulatory proteins. Required for cellular homeostasis and for survival from DNA damage and developmental changes induced by stress. Degrades polypeptides processively to yield small peptide fragments that are 5 to 10 amino acids long. Binds to DNA in a double-stranded, site-specific manner. This chain is Lon protease, found in Halothermothrix orenii (strain H 168 / OCM 544 / DSM 9562).